The primary structure comprises 92 residues: Probable Fe(2+)-trafficking protein (92 aa).

Belongs to the Fe(2+)-trafficking protein family.

Functionally, could be a mediator in iron transactions between iron acquisition and iron-requiring processes, such as synthesis and/or repair of Fe-S clusters in biosynthetic enzymes. The protein is Probable Fe(2+)-trafficking protein of Shewanella oneidensis (strain ATCC 700550 / JCM 31522 / CIP 106686 / LMG 19005 / NCIMB 14063 / MR-1).